A 200-amino-acid chain; its full sequence is NAD(P)H dehydrogenase (quinone) (200 aa).

The 188-residue stretch at 4–191 (VLVLYYSSYG…DIARYQGKHV (188 aa)) folds into the Flavodoxin-like domain. Residues 10–15 (SSYGHV) and 79–81 (TRF) each bind FMN. Tyr12 provides a ligand contact to NAD(+). Trp99 lines the substrate pocket. FMN contacts are provided by residues 114–120 (STGTQHG) and His135.

The protein belongs to the WrbA family. It depends on FMN as a cofactor.

The catalysed reaction is a quinone + NADH + H(+) = a quinol + NAD(+). It carries out the reaction a quinone + NADPH + H(+) = a quinol + NADP(+). The sequence is that of NAD(P)H dehydrogenase (quinone) from Burkholderia ambifaria (strain MC40-6).